The following is a 281-amino-acid chain: N-acetylmuramic acid 6-phosphate etherase (281 aa).

In terms of domain architecture, SIS spans 63 to 226 (IVPRMKQGGR…TTSVMIQLGR (164 aa)). Catalysis depends on glutamate 91, which acts as the Proton donor. Residue glutamate 122 is part of the active site.

It belongs to the GCKR-like family. MurNAc-6-P etherase subfamily. As to quaternary structure, homodimer.

It catalyses the reaction N-acetyl-D-muramate 6-phosphate + H2O = N-acetyl-D-glucosamine 6-phosphate + (R)-lactate. It functions in the pathway amino-sugar metabolism; N-acetylmuramate degradation. Specifically catalyzes the cleavage of the D-lactyl ether substituent of MurNAc 6-phosphate, producing GlcNAc 6-phosphate and D-lactate. This is N-acetylmuramic acid 6-phosphate etherase from Bacteroides fragilis (strain YCH46).